Consider the following 37-residue polypeptide: MKRRPRKWKKKGRMRWKWIKKRIRRLKRQRRKERGLI.

This sequence belongs to the eukaryotic ribosomal protein eS32 family. In terms of assembly, part of the small ribosomal subunit.

Its function is as follows. Interacts with N(4)-acetylcytidine (ac(4)C) 1459 of the small rRNA; the acetyl group of ac(4)C1459 briges the interaction with this protein. This Thermococcus kodakarensis (strain ATCC BAA-918 / JCM 12380 / KOD1) (Pyrococcus kodakaraensis (strain KOD1)) protein is Small ribosomal subunit protein eS32 (rpl41e).